Here is a 219-residue protein sequence, read N- to C-terminus: tRNA (guanine-N(7)-)-methyltransferase (219 aa).

Positions 43, 68, 101, and 124 each coordinate S-adenosyl-L-methionine. Positions 128 and 160 each coordinate substrate.

The protein belongs to the class I-like SAM-binding methyltransferase superfamily. TrmB family.

The enzyme catalyses guanosine(46) in tRNA + S-adenosyl-L-methionine = N(7)-methylguanosine(46) in tRNA + S-adenosyl-L-homocysteine. It functions in the pathway tRNA modification; N(7)-methylguanine-tRNA biosynthesis. Functionally, catalyzes the formation of N(7)-methylguanine at position 46 (m7G46) in tRNA. The sequence is that of tRNA (guanine-N(7)-)-methyltransferase from Clostridium botulinum (strain Eklund 17B / Type B).